Consider the following 343-residue polypeptide: MDRIIDTAATSEDEAIEVSIRPKRLADYLGQQPVREQMDIYIQATKARAEALDHVLIFGPPGLGKTTLSHVIAYELGVKLRVTSGPVIEKAGDLAALLTNLQPYDVLFIDEIHRLSPVVEEVLYPAMEDFQIDIMIGEGPAARSIKIDLPPFTLIGATTRTGLLTAPLRDRFGIVQRLEFYSPEDLARIVRRSAGILNIDCTTEGAAEIAQRARGTPRIANRLLRRVRDYAEVKAGGQITIEVAQAAMQMLKVDQGGFDELDRRLLHTIVEYFDGGPVGIESLAASLSEERGTLEDVVEPYLIQQGFLVRTARGRMATDKAYQHLALQPRERVSAFTDPEDLF.

Positions 1-181 are large ATPase domain (RuvB-L); the sequence is MDRIIDTAAT…FGIVQRLEFY (181 aa). ATP is bound by residues Ile20, Arg21, Gly62, Lys65, Thr66, Thr67, 128–130, Arg171, Tyr181, and Arg218; that span reads EDF. Position 66 (Thr66) interacts with Mg(2+). Positions 182–252 are small ATPAse domain (RuvB-S); it reads SPEDLARIVR…VAQAAMQMLK (71 aa). A head domain (RuvB-H) region spans residues 255–343; sequence QGGFDELDRR…SAFTDPEDLF (89 aa). DNA is bound by residues Arg291, Arg310, and Arg315.

It belongs to the RuvB family. Homohexamer. Forms an RuvA(8)-RuvB(12)-Holliday junction (HJ) complex. HJ DNA is sandwiched between 2 RuvA tetramers; dsDNA enters through RuvA and exits via RuvB. An RuvB hexamer assembles on each DNA strand where it exits the tetramer. Each RuvB hexamer is contacted by two RuvA subunits (via domain III) on 2 adjacent RuvB subunits; this complex drives branch migration. In the full resolvosome a probable DNA-RuvA(4)-RuvB(12)-RuvC(2) complex forms which resolves the HJ.

It localises to the cytoplasm. The enzyme catalyses ATP + H2O = ADP + phosphate + H(+). The RuvA-RuvB-RuvC complex processes Holliday junction (HJ) DNA during genetic recombination and DNA repair, while the RuvA-RuvB complex plays an important role in the rescue of blocked DNA replication forks via replication fork reversal (RFR). RuvA specifically binds to HJ cruciform DNA, conferring on it an open structure. The RuvB hexamer acts as an ATP-dependent pump, pulling dsDNA into and through the RuvAB complex. RuvB forms 2 homohexamers on either side of HJ DNA bound by 1 or 2 RuvA tetramers; 4 subunits per hexamer contact DNA at a time. Coordinated motions by a converter formed by DNA-disengaged RuvB subunits stimulates ATP hydrolysis and nucleotide exchange. Immobilization of the converter enables RuvB to convert the ATP-contained energy into a lever motion, pulling 2 nucleotides of DNA out of the RuvA tetramer per ATP hydrolyzed, thus driving DNA branch migration. The RuvB motors rotate together with the DNA substrate, which together with the progressing nucleotide cycle form the mechanistic basis for DNA recombination by continuous HJ branch migration. Branch migration allows RuvC to scan DNA until it finds its consensus sequence, where it cleaves and resolves cruciform DNA. In Xylella fastidiosa (strain 9a5c), this protein is Holliday junction branch migration complex subunit RuvB.